The sequence spans 189 residues: Pyridoxal 5'-phosphate synthase subunit PdxT (189 aa).

Residue 47-49 coordinates L-glutamine; sequence GES. The active-site Nucleophile is the Cys79. L-glutamine contacts are provided by residues Arg106 and 135-136; that span reads IR. Catalysis depends on charge relay system residues His171 and Glu173.

It belongs to the glutaminase PdxT/SNO family. In terms of assembly, in the presence of PdxS, forms a dodecamer of heterodimers. Only shows activity in the heterodimer.

It catalyses the reaction aldehydo-D-ribose 5-phosphate + D-glyceraldehyde 3-phosphate + L-glutamine = pyridoxal 5'-phosphate + L-glutamate + phosphate + 3 H2O + H(+). It carries out the reaction L-glutamine + H2O = L-glutamate + NH4(+). The protein operates within cofactor biosynthesis; pyridoxal 5'-phosphate biosynthesis. Its function is as follows. Catalyzes the hydrolysis of glutamine to glutamate and ammonia as part of the biosynthesis of pyridoxal 5'-phosphate. The resulting ammonia molecule is channeled to the active site of PdxS. This is Pyridoxal 5'-phosphate synthase subunit PdxT from Thermoanaerobacter pseudethanolicus (strain ATCC 33223 / 39E) (Clostridium thermohydrosulfuricum).